Reading from the N-terminus, the 156-residue chain is Arginine repressor (156 aa).

The protein belongs to the ArgR family.

It localises to the cytoplasm. It participates in amino-acid biosynthesis; L-arginine biosynthesis [regulation]. Its function is as follows. Regulates arginine biosynthesis genes. The polypeptide is Arginine repressor (Yersinia enterocolitica serotype O:8 / biotype 1B (strain NCTC 13174 / 8081)).